A 141-amino-acid polypeptide reads, in one-letter code: HTH-type transcriptional regulator LrpA (141 aa).

An HTH asnC-type domain is found at 2 to 63 (IDERDKIILE…RINPKKLGYS (62 aa)). A DNA-binding region (H-T-H motif) is located at residues 21-40 (FTEIAKKLGISETAVRKRVK).

Homooctamer; tetramer of dimers.

In terms of biological role, DNA-binding protein that negatively regulates its own transcription. Interferes with RNA polymerase (RNAP) recruitment by inhibiting the association of RNAP with the TBP-TFB promoter complex. The polypeptide is HTH-type transcriptional regulator LrpA (lrpA) (Pyrococcus horikoshii (strain ATCC 700860 / DSM 12428 / JCM 9974 / NBRC 100139 / OT-3)).